An 848-amino-acid chain; its full sequence is ATP-dependent Clp protease ATP-binding subunit ClpC1 (848 aa).

Residues 2–144 (FERFTDRARK…RQQVIQLLSG (143 aa)) form the Clp R domain. 2 repeat regions span residues 5-70 (FTDR…IGQG) and 80-144 (FTPR…LLSG). The interval 171–418 (LDQFGRNLTA…RMRIRRMTAP (248 aa)) is i. Residue 216–223 (GEPGVGKT) coordinates ATP. In terms of domain architecture, UVR spans 425–460 (DEKIAEARREKESAIDAQDFEKAASLRDREKTLVAQ). The II stretch occupies residues 479-670 (VDDEQIAEVL…VLIFTSNLGT (192 aa)). Residue 553–560 (GPSGVGKT) participates in ATP binding. Residues 821 to 848 (TGTRKPPAEPDLAKAGAHSAGGPEPAAR) form a disordered region.

Belongs to the ClpA/ClpB family. ClpC subfamily.

Its function is as follows. ATP-dependent specificity component of the Clp protease. It directs the protease to specific substrates. Can perform chaperone functions in the absence of ClpP. The protein is ATP-dependent Clp protease ATP-binding subunit ClpC1 (clpC1) of Mycobacterium tuberculosis (strain CDC 1551 / Oshkosh).